A 1501-amino-acid polypeptide reads, in one-letter code: MSDSKMSSQDESKLEKAISQDSSSENHSINEYHGFDAHTSENIQNLARTFTHDSFKDDSSAGLLKYLTHMSEVPGVNPYEHEEINNDQLNPDSENFNAKFWVKNLRKLFESDPEYYKPSKLGIGYRNLRAYGVANDSDYQPTVTNALWKLATEGFRHFQKDDDSRYFDILKSMDAIMRPGELTVVLGRPGAGCSTLLKTIAVNTYGFHIGKESQITYDGLSPHDIERHYRGDVIYSAETDVHFPHLSVGDTLEFAARLRTPQNRGEGIDRETYAKHMASVYMATYGLSHTRNTNVGNDFVRGVSGGERKRVSIAEASLSGANIQCWDNATRGLDSATALEFIRALKTSAVILDTTPLIAIYQCSQDAYDLFDKVVVLYEGYQIFFGKATKAKEYFEKMGWKCPQRQTTADFLTSLTNPAEREPLPGYEDKVPRTAQEFETYWKNSPEYAELTKEIDEYFVECERSNTRETYRESHVAKQSNNTRPASPYTVSFFMQVRYGVARNFLRMKGDPSIPIFSVFGQLVMGLILSSVFYNLSQTTGSFYYRGAAMFFAVLFNAFSSLLEIMSLFEARPIVEKHKKYALYRPSADALASIISELPVKLAMSMSFNFVFYFMVNFRRNPGRFFFYWLMCIWCTFVMSHLFRSIGAVSTSISGAMTPATVLLLAMVIYTGFVIPTPSMLGWSRWINYINPVGYVFESLMVNEFHGREFQCAQYVPSGPGYENISRSNQVCTAVGSVPGNEMVSGTNYLAGAYQYYNSHKWRNLGITIGFAVFFLAIYIALTEFNKGAMQKGEIVLFLKGSLKKHKRKTAASNKGDIEAGPVAGKLDYQDEAEAVNNEKFTEKGSTGSVDFPENREIFFWRDLTYQVKIKKEDRVILDHVDGWVKPGQITALMGASGAGKTTLLNCLSERVTTGIITDGERLVNGHALDSSFQRSIGYVQQQDVHLPTSTVREALQFSAYLRQSNKISKKEKDDYVDYVIDLLEMTDYADALVGVAGEGLNVEQRKRLTIGVELVAKPKLLLFLDEPTSGLDSQTAWSICKLMRKLADHGQAILCTIHQPSALIMAEFDRLLFLQKGGRTAYFGELGENCQTMINYFEKYGADPCPKEANPAEWMLQVVGAAPGSHAKQDYFEVWRNSSEYQAVREEINRMEAELSKLPRDNDPEALLKYAAPLWKQYLLVSWRTIVQDWRSPGYIYSKIFLVVSAALFNGFSFFKAKNNMQGLQNQMFSVFMFFIPFNTLVQQMLPYFVKQRDVYEVREAPSRTFSWFAFIAGQITSEIPYQVAVGTIAFFCWYYPLGLYNNATPTDSVNPRGVLMWMLVTAFYVYTATMGQLCMSFSELADNAANLATLLFTMCLNFCGVLAGPDVLPGFWIFMYRCNPFTYLVQAMLSTGLANTFVKCAEREYVSVKPPNGESCSTYLDPYIKFAGGYFETRNDGSCAFCQMSSTNTFLKSVNSLYSERWRNFGIFIAFIAINIILTVIFYWLARVPKGNREKKNKK.

Positions 1-30 are disordered; the sequence is MSDSKMSSQDESKLEKAISQDSSSENHSIN. Residues 1–513 lie on the Cytoplasmic side of the membrane; sequence MSDSKMSSQD…NFLRMKGDPS (513 aa). Residues 8–18 show a composition bias toward basic and acidic residues; it reads SQDESKLEKAI. Positions 150–404 constitute an ABC transporter 1 domain; the sequence is LATEGFRHFQ…FEKMGWKCPQ (255 aa). Residues 514–534 form a helical membrane-spanning segment; that stretch reads IPIFSVFGQLVMGLILSSVFY. A glycan (N-linked (GlcNAc...) asparagine) is linked at asparagine 535. 4 helical membrane passes run 549 to 569, 598 to 618, 623 to 643, and 655 to 675; these read AMFF…MSLF, LPVK…MVNF, GRFF…SHLF, and GAMT…GFVI. An N-linked (GlcNAc...) asparagine glycan is attached at asparagine 724. The chain crosses the membrane as a helical span at residues 765–785; the sequence is LGITIGFAVFFLAIYIALTEF. At 786–1195 the chain is on the cytoplasmic side; that stretch reads NKGAMQKGEI…TIVQDWRSPG (410 aa). Residues 859–1103 enclose the ABC transporter 2 domain; that stretch reads FFWRDLTYQV…MINYFEKYGA (245 aa). 895 to 902 is an ATP binding site; sequence GASGAGKT. 6 consecutive transmembrane segments (helical) span residues 1196–1216, 1230–1250, 1281–1301, 1315–1335, 1356–1376, and 1467–1487; these read YIYS…FSFF, FSVF…LPYF, IPYQ…PLGL, GVLM…MGQL, MCLN…FWIF, and FGIF…FYWL.

Belongs to the ABC transporter superfamily. ABCG family. PDR (TC 3.A.1.205) subfamily.

Its subcellular location is the membrane. In terms of biological role, transporter, whose physiological function is not yet established. Confers resistance to the chemical cycloheximide. This Candida albicans (Yeast) protein is Multidrug resistance protein CDR1 (CDR1).